The primary structure comprises 548 residues: MAGSNTIDLNPELLAAAAESKAWPFEEAKKIIERYKGGEFPETILFETGYGPSGLPHIGTFGEVARTSMVRHAFRVLTQDKVATKLLCFSDDMDGMRKIPDNVPDRAALEPHLHKPLSSVPNPFGGDYASFADHNNAMLCRFLDTFGFDYEFASATQYYKSGRFDAMLLRAAERYDKIMAVMLPTLGPERQATYSPFLPISPKSGRVLYVPMKHVDAKAGTITFDDEGTETTLSITGGRVKLQWKPDFGMRWAALGVDFEMFGKDHQTNAVVYDRICNILGGRAPEHFVYELFLDENGQKISKSKGNGLTIDEWLTYAPTESLGLYMYQRPRQAKKLYFDVIPRAVDEYYTFLGAYPRQDWKERLGNPVWHMHDGNPPAIDMPVPFSLLLNLVSASNAQNKDVLWGFISRHTQGVTPKTHPELDQLVGHAIRYFDDFVRPTKTFRAADEVEREALEALDAALGALPADAGGEAIQNASLNVARKIERYQDHSKQSPEGGPGVSGAFFQMIYQVLIGQERGPRFGSFAALYGVAETRALIQQALAGQLA.

A 'HIGH' region motif is present at residues 52–60; the sequence is PSGLPHIGT. The short motif at 300 to 304 is the 'KMSKS' region element; sequence KISKS. Lysine 303 is a binding site for ATP.

The protein belongs to the class-I aminoacyl-tRNA synthetase family.

It is found in the cytoplasm. The catalysed reaction is tRNA(Lys) + L-lysine + ATP = L-lysyl-tRNA(Lys) + AMP + diphosphate. This chain is Lysine--tRNA ligase, found in Mesorhizobium japonicum (strain LMG 29417 / CECT 9101 / MAFF 303099) (Mesorhizobium loti (strain MAFF 303099)).